Consider the following 311-residue polypeptide: MSYQDLKECKIITAFITPFHEDGSINFDAIPALIEHLLAHHTDGILLAGTTAESPTLTHDEELELFAAVQKVVNGRVPLIAGVGTNDTRDSIEFVKEVAEFGGFAAGLAIVPYYNKPSQEGMYQHFKAIADASDLPIIIYNIPGRVVVELTPETMLRLADYPNIIGVKECTSLANMAYLIEHKPEEFLIYTGEDGDAFHAMNLGADGVISVASHTNGDEMHEMFTAIAESDMKKAAAIQRKFIPKVNALFSYPSPAPVKAVLNYMGFEAGPTRLPLIPAPEEDAKRIIKVVVDGDYEATKATVTGVLRPDY.

Thr-51 is a pyruvate binding site. Tyr-140 functions as the Proton donor/acceptor in the catalytic mechanism. Lys-168 (schiff-base intermediate with substrate) is an active-site residue. Ile-209 contacts pyruvate.

This sequence belongs to the DapA family. In terms of assembly, homotetramer; dimer of dimers.

The protein resides in the cytoplasm. It carries out the reaction L-aspartate 4-semialdehyde + pyruvate = (2S,4S)-4-hydroxy-2,3,4,5-tetrahydrodipicolinate + H2O + H(+). The protein operates within amino-acid biosynthesis; L-lysine biosynthesis via DAP pathway; (S)-tetrahydrodipicolinate from L-aspartate: step 3/4. Functionally, catalyzes the condensation of (S)-aspartate-beta-semialdehyde [(S)-ASA] and pyruvate to 4-hydroxy-tetrahydrodipicolinate (HTPA). In Streptococcus pneumoniae (strain Taiwan19F-14), this protein is 4-hydroxy-tetrahydrodipicolinate synthase.